We begin with the raw amino-acid sequence, 422 residues long: Dihydrolipoyllysine-residue succinyltransferase component of 2-oxoglutarate dehydrogenase complex (422 aa).

The 76-residue stretch at 1–76 (MPEVKVPELA…EVGQAIAVIG (76 aa)) folds into the Lipoyl-binding domain. Lys42 carries the post-translational modification N6-lipoyllysine. The interval 77–184 (EGSGNASKEN…APAKEEKKYN (108 aa)) is disordered. Composition is skewed to polar residues over residues 80-94 (GNAS…TPQQ) and 114-130 (EVNQ…NATP). A Peripheral subunit-binding (PSBD) domain is found at 127–163 (NATPSARRYARENGVNLAEVSPKTNDVVRKEDIDKKQ). The segment covering 152–163 (DVVRKEDIDKKQ) has biased composition (basic and acidic residues). Over residues 164-176 (QAPASTQTTQQAP) the composition is skewed to low complexity. Catalysis depends on residues His393 and Asp397.

Belongs to the 2-oxoacid dehydrogenase family. As to quaternary structure, forms a 24-polypeptide structural core with octahedral symmetry. Part of the 2-oxoglutarate dehydrogenase (OGDH) complex composed of E1 (2-oxoglutarate dehydrogenase), E2 (dihydrolipoamide succinyltransferase) and E3 (dihydrolipoamide dehydrogenase); the complex contains multiple copies of the three enzymatic components (E1, E2 and E3). Requires (R)-lipoate as cofactor.

It carries out the reaction N(6)-[(R)-dihydrolipoyl]-L-lysyl-[protein] + succinyl-CoA = N(6)-[(R)-S(8)-succinyldihydrolipoyl]-L-lysyl-[protein] + CoA. The protein operates within amino-acid degradation; L-lysine degradation via saccharopine pathway; glutaryl-CoA from L-lysine: step 6/6. Functionally, E2 component of the 2-oxoglutarate dehydrogenase (OGDH) complex which catalyzes the second step in the conversion of 2-oxoglutarate to succinyl-CoA and CO(2). This chain is Dihydrolipoyllysine-residue succinyltransferase component of 2-oxoglutarate dehydrogenase complex (odhB), found in Staphylococcus aureus (strain bovine RF122 / ET3-1).